The following is a 433-amino-acid chain: Probable dipeptidase (433 aa).

Cys-20 is an active-site residue.

It belongs to the peptidase C69 family.

It catalyses the reaction an L-aminoacyl-L-amino acid + H2O = 2 an L-alpha-amino acid. This Salmonella dublin protein is Probable dipeptidase (pipD).